We begin with the raw amino-acid sequence, 119 residues long: Ribosome-binding factor A (119 aa).

Belongs to the RbfA family. In terms of assembly, monomer. Binds 30S ribosomal subunits, but not 50S ribosomal subunits or 70S ribosomes.

It is found in the cytoplasm. In terms of biological role, one of several proteins that assist in the late maturation steps of the functional core of the 30S ribosomal subunit. Associates with free 30S ribosomal subunits (but not with 30S subunits that are part of 70S ribosomes or polysomes). Required for efficient processing of 16S rRNA. May interact with the 5'-terminal helix region of 16S rRNA. This chain is Ribosome-binding factor A, found in Chlorobium limicola (strain DSM 245 / NBRC 103803 / 6330).